Reading from the N-terminus, the 414-residue chain is 5-aminolevulinate synthase (414 aa).

3 residues coordinate substrate: Arg22, Ser133, and Lys152. Residues Ser185, His213, and Thr241 each coordinate pyridoxal 5'-phosphate. The active site involves Lys244. Position 244 is an N6-(pyridoxal phosphate)lysine (Lys244). Pyridoxal 5'-phosphate-binding residues include Thr273 and Thr274. Thr359 is a binding site for substrate.

It belongs to the class-II pyridoxal-phosphate-dependent aminotransferase family. In terms of assembly, homodimer. It depends on pyridoxal 5'-phosphate as a cofactor.

It catalyses the reaction succinyl-CoA + glycine + H(+) = 5-aminolevulinate + CO2 + CoA. It participates in porphyrin-containing compound metabolism; protoporphyrin-IX biosynthesis; 5-aminolevulinate from glycine: step 1/1. This Rickettsia felis (strain ATCC VR-1525 / URRWXCal2) (Rickettsia azadi) protein is 5-aminolevulinate synthase (hemA).